A 218-amino-acid polypeptide reads, in one-letter code: Imidazole glycerol phosphate synthase subunit HisH (218 aa).

Residues 1 to 213 (MTTIIDYGIG…AALPTTEEAG (213 aa)) form the Glutamine amidotransferase type-1 domain. Residue Cys-79 is the Nucleophile of the active site. Active-site residues include His-188 and Glu-190.

In terms of assembly, heterodimer of HisH and HisF.

It is found in the cytoplasm. The catalysed reaction is 5-[(5-phospho-1-deoxy-D-ribulos-1-ylimino)methylamino]-1-(5-phospho-beta-D-ribosyl)imidazole-4-carboxamide + L-glutamine = D-erythro-1-(imidazol-4-yl)glycerol 3-phosphate + 5-amino-1-(5-phospho-beta-D-ribosyl)imidazole-4-carboxamide + L-glutamate + H(+). It carries out the reaction L-glutamine + H2O = L-glutamate + NH4(+). The protein operates within amino-acid biosynthesis; L-histidine biosynthesis; L-histidine from 5-phospho-alpha-D-ribose 1-diphosphate: step 5/9. IGPS catalyzes the conversion of PRFAR and glutamine to IGP, AICAR and glutamate. The HisH subunit catalyzes the hydrolysis of glutamine to glutamate and ammonia as part of the synthesis of IGP and AICAR. The resulting ammonia molecule is channeled to the active site of HisF. The chain is Imidazole glycerol phosphate synthase subunit HisH from Salinibacter ruber (strain DSM 13855 / M31).